The following is a 145-amino-acid chain: MNIQDVKNYLPHRYPFLLIDRVLELEVGKSIVALKNVTFNEPQFIGHFPDQPIMPGVMIVEALAQATGILAFKAEVSKPTNGQIYMLVGIDKVRFKRMVEPGDQLRLEVGIVTVKRGIWKFKCKATVDSQTITSAELMCTQKATD.

The active site involves His-47.

Belongs to the thioester dehydratase family. FabZ subfamily.

Its subcellular location is the cytoplasm. It carries out the reaction a (3R)-hydroxyacyl-[ACP] = a (2E)-enoyl-[ACP] + H2O. Functionally, involved in unsaturated fatty acids biosynthesis. Catalyzes the dehydration of short chain beta-hydroxyacyl-ACPs and long chain saturated and unsaturated beta-hydroxyacyl-ACPs. This is 3-hydroxyacyl-[acyl-carrier-protein] dehydratase FabZ from Vesicomyosocius okutanii subsp. Calyptogena okutanii (strain HA).